A 329-amino-acid polypeptide reads, in one-letter code: Mitochondrial glycine transporter (329 aa).

Solcar repeat units follow at residues 19 to 103, 130 to 214, and 232 to 316; these read SKTT…LRQP, LSNW…LKRH, and SSSS…LILR. The next 6 membrane-spanning stretches (helical) occupy residues 25–50, 78–104, 136–161, 189–212, 236–262, and 291–309; these read FAAG…TRVQ, GTLP…RQPL, LGTG…VRYE, GFGA…EQLK, INFI…KTRL, and GLGL…AWTV.

Belongs to the mitochondrial carrier (TC 2.A.29) family. SLC25A38 subfamily.

The protein resides in the mitochondrion inner membrane. It catalyses the reaction glycine(in) = glycine(out). Its function is as follows. Mitochondrial glycine transporter that imports glycine into the mitochondrial matrix. Plays an important role in providing glycine for the first enzymatic step in heme biosynthesis, the condensation of glycine with succinyl-CoA to produce 5-aminolevulinate (ALA) in the mitochondrial matrix. This is Mitochondrial glycine transporter from Aspergillus terreus (strain NIH 2624 / FGSC A1156).